A 350-amino-acid polypeptide reads, in one-letter code: tRNA uridine(34) hydroxylase (350 aa).

Positions 146–240 (DDPDALFIDM…YARKAREQGL (95 aa)) constitute a Rhodanese domain. The Cysteine persulfide intermediate role is filled by cysteine 200.

This sequence belongs to the TrhO family.

It catalyses the reaction uridine(34) in tRNA + AH2 + O2 = 5-hydroxyuridine(34) in tRNA + A + H2O. Its function is as follows. Catalyzes oxygen-dependent 5-hydroxyuridine (ho5U) modification at position 34 in tRNAs. This chain is tRNA uridine(34) hydroxylase, found in Shigella sonnei (strain Ss046).